The sequence spans 269 residues: Ribosomal RNA large subunit methyltransferase E (269 aa).

S-adenosyl-L-methionine-binding residues include Gly48, Trp50, Asp68, Asp86, and Asp111. The active-site Proton acceptor is Lys151. The 59-residue stretch at 198 to 256 folds into the TRAM domain; the sequence is PVAAGDRIEVTVEERGDEGDGIAYVEGYSIFVSDADVGETVTVEVVDAKPRFGFATRVD.

It belongs to the class I-like SAM-binding methyltransferase superfamily. RNA methyltransferase RlmE family.

It localises to the cytoplasm. It catalyses the reaction uridine(2552) in 23S rRNA + S-adenosyl-L-methionine = 2'-O-methyluridine(2552) in 23S rRNA + S-adenosyl-L-homocysteine + H(+). Specifically methylates the uridine in position 2552 of 23S rRNA at the 2'-O position of the ribose in the fully assembled 50S ribosomal subunit. The protein is Ribosomal RNA large subunit methyltransferase E of Halorubrum lacusprofundi (strain ATCC 49239 / DSM 5036 / JCM 8891 / ACAM 34).